The sequence spans 143 residues: Nucleoside diphosphate kinase (143 aa).

6 residues coordinate ATP: K11, F59, R87, T93, R104, and N114. Residue H117 is the Pros-phosphohistidine intermediate of the active site.

It belongs to the NDK family. As to quaternary structure, homotetramer. The cofactor is Mg(2+).

Its subcellular location is the cytoplasm. It catalyses the reaction a 2'-deoxyribonucleoside 5'-diphosphate + ATP = a 2'-deoxyribonucleoside 5'-triphosphate + ADP. It carries out the reaction a ribonucleoside 5'-diphosphate + ATP = a ribonucleoside 5'-triphosphate + ADP. Major role in the synthesis of nucleoside triphosphates other than ATP. The ATP gamma phosphate is transferred to the NDP beta phosphate via a ping-pong mechanism, using a phosphorylated active-site intermediate. This chain is Nucleoside diphosphate kinase, found in Acinetobacter baylyi (strain ATCC 33305 / BD413 / ADP1).